The primary structure comprises 598 residues: Serine/threonine-protein kinase PLK1 (598 aa).

Residues 1-26 are disordered; that stretch reads MAQVAGKKLTVAPEAGKPPGIPGSSS. Phosphoserine occurs at positions 25 and 26. In terms of domain architecture, Protein kinase spans 44-296; sequence YLRGRFLGKG…IDDLLNDEFF (253 aa). Residues 50 to 58, lysine 73, and glutamate 122 each bind ATP; that span reads LGKGGFAKC. The active-site Proton acceptor is aspartate 167. ATP contacts are provided by residues 169-172 and aspartate 185; that span reads KLGN. Residues 185 to 212 form an activation loop region; sequence DFGLATKVEYDGERKKTLCGTPNYIAPE. Threonine 201 bears the Phosphothreonine mark. Phosphoserine; by autocatalysis occurs at positions 260 and 326. Residues 328–331 carry the D-box that targets the protein for proteasomal degradation in anaphase motif; it reads RKPL. A disordered region spans residues 336-360; that stretch reads KGQDSPLVEKQSVPAKEEEMQQPES. Serine 340 bears the Phosphoserine mark. The POLO box 1 domain maps to 404-482; sequence WVSKWVDYSD…LKYFRNYMSE (79 aa). Residues 487–501 are linker; that stretch reads AGANITPREGDELAR. One can recognise a POLO box 2 domain in the interval 504–586; it reads FLRTWFRTRS…ARTMVEKLQS (83 aa). The interval 532-534 is important for interaction with phosphorylated proteins; it reads HTK.

Belongs to the protein kinase superfamily. Ser/Thr protein kinase family. In terms of assembly, interacts with plk1 and kif2a. Interacts with fbxo5. In terms of processing, activated by phosphorylation on Thr-201 during M phase. Post-translationally, protein levels are down-regulated by proteasomal degradation in anaphase.

The protein localises to the nucleus. Its subcellular location is the cytoplasm. The protein resides in the cytoskeleton. It localises to the microtubule organizing center. It is found in the centrosome. The protein localises to the spindle. Its subcellular location is the midbody. The catalysed reaction is L-seryl-[protein] + ATP = O-phospho-L-seryl-[protein] + ADP + H(+). It carries out the reaction L-threonyl-[protein] + ATP = O-phospho-L-threonyl-[protein] + ADP + H(+). In terms of biological role, plays multiple essential roles during mitosis. Phosphorylates the N-terminal domain of cdc25, which leads to cyclin b-cdc2 activation and mitotic entry. Also required for organization of bipolar spindles, and for exit from mitosis. Phosphorylates tpx2. This chain is Serine/threonine-protein kinase PLK1 (plk1), found in Xenopus tropicalis (Western clawed frog).